The primary structure comprises 238 residues: MNKNVMVKGLTALTILTILTSLGFAENISNQPHSIAKAEKNVKEITDATKEPYNSVVAFVGGTGVVVGKNTIVTNKHIAKSNDIFKNRVSAHHSSKGKGGGNYDVKDIVEYPGKEDLAIVHVHETSTEGLNFNKNVSYTKFADGAKVKDRISVIGYPKGAQTKYKMFESTGTINHISGTFMEFDAYAQPGNSGSPVLNSKHELIGILYAGSGKDESEKNFGVYFTPQLKEFIQNNIEK.

A signal peptide spans 1–38 (MNKNVMVKGLTALTILTILTSLGFAENISNQPHSIAKA). Catalysis depends on charge relay system residues H77, D116, and S192.

Belongs to the peptidase S1B family.

The protein localises to the secreted. This Staphylococcus aureus (strain COL) protein is Serine protease SplA (splA).